A 148-amino-acid chain; its full sequence is Large-conductance mechanosensitive channel (148 aa).

2 helical membrane passes run 12–32 (AFAM…GGAF) and 85–105 (GQFL…FLFI).

The protein belongs to the MscL family. As to quaternary structure, homopentamer.

It localises to the cell inner membrane. Functionally, channel that opens in response to stretch forces in the membrane lipid bilayer. May participate in the regulation of osmotic pressure changes within the cell. In Bacteroides thetaiotaomicron (strain ATCC 29148 / DSM 2079 / JCM 5827 / CCUG 10774 / NCTC 10582 / VPI-5482 / E50), this protein is Large-conductance mechanosensitive channel.